The sequence spans 172 residues: Shikimate kinase (172 aa).

Residue 14 to 19 (GAGKTT) participates in ATP binding. Thr-18 contacts Mg(2+). 3 residues coordinate substrate: Asp-36, Arg-60, and Gly-82. ATP is bound at residue Arg-119. Arg-137 serves as a coordination point for substrate.

It belongs to the shikimate kinase family. In terms of assembly, monomer. Mg(2+) serves as cofactor.

Its subcellular location is the cytoplasm. It carries out the reaction shikimate + ATP = 3-phosphoshikimate + ADP + H(+). Its pathway is metabolic intermediate biosynthesis; chorismate biosynthesis; chorismate from D-erythrose 4-phosphate and phosphoenolpyruvate: step 5/7. In terms of biological role, catalyzes the specific phosphorylation of the 3-hydroxyl group of shikimic acid using ATP as a cosubstrate. The sequence is that of Shikimate kinase from Thermobifida fusca (strain YX).